The primary structure comprises 143 residues: Type II secretion system core protein G (143 aa).

The propeptide at 1–17 (MIKRSITRSPSRAGQAG) is leader sequence. Met-18 carries the N-methylmethionine modification. A helical transmembrane segment spans residues 18–38 (MSLLEIIIVIVLIGAVLTLVG).

The protein belongs to the GSP G family. As to quaternary structure, type II secretion system is composed of four main components: the outer membrane complex, the inner membrane complex, the cytoplasmic secretion ATPase and the periplasm-spanning pseudopilus. Forms homomultimers. Interacts with pseudopilin tip complex component XpsJ as well as XpsI and XcpH. Interacts with XpsN and secretin XpsD. Cleaved by the prepilin peptidase. In terms of processing, methylated by prepilin peptidase at the amino group of the N-terminal methionine once the leader sequence is cleaved.

It localises to the cell inner membrane. Core component of the type II secretion system required for the energy-dependent secretion of extracellular factors such as proteases and toxins from the periplasm. Pseudopilin (pilin-like) protein that polymerizes to form the pseudopilus. Further polymerization triggers pseudopilus growth. The protein is Type II secretion system core protein G (xpsG) of Xanthomonas campestris pv. campestris (strain ATCC 33913 / DSM 3586 / NCPPB 528 / LMG 568 / P 25).